The primary structure comprises 1393 residues: Rab3 GTPase-activating protein non-catalytic subunit (1393 aa).

Residues 36 to 67 (RDPSKSTDWEDDGWGAWEENEPQEPEEEGNTC) are disordered. Ser-39 carries the post-translational modification Phosphoserine. Residues 44–64 (WEDDGWGAWEENEPQEPEEEG) show a composition bias toward acidic residues. Phosphoserine is present on Ser-450. Residue Thr-901 is modified to Phosphothreonine. Ser-916 and Ser-978 each carry phosphoserine.

It belongs to the Rab3-GAP regulatory subunit family. The Rab3 GTPase-activating complex is a heterodimer composed of RAB3GAP1 and RAB3GAP2. The Rab3 GTPase-activating complex interacts with DMXL2. Interacts with LMAN1. Ubiquitous.

The protein localises to the cytoplasm. Its subcellular location is the endoplasmic reticulum. Its function is as follows. Regulatory subunit of the Rab3 GTPase-activating (Rab3GAP) complex composed of RAB3GAP1 and RAB3GAP2, which has GTPase-activating protein (GAP) activity towards various Rab3 subfamily members (RAB3A, RAB3B, RAB3C and RAB3D), RAB5A and RAB43, and guanine nucleotide exchange factor (GEF) activity towards RAB18. As part of the Rab3GAP complex, acts as a GAP for Rab3 proteins by converting active RAB3-GTP to the inactive form RAB3-GDP. Rab3 proteins are involved in regulated exocytosis of neurotransmitters and hormones. The Rab3GAP complex acts as a GEF for RAB18 by promoting the conversion of inactive RAB18-GDP to the active form RAB18-GTP. Recruits and stabilizes RAB18 at the cis-Golgi membrane in human fibroblasts where RAB18 is most likely activated. Also involved in RAB18 recruitment at the endoplasmic reticulum (ER) membrane where it maintains proper ER structure. Required for normal eye and brain development. May participate in neurodevelopmental processes such as proliferation, migration and differentiation before synapse formation, and non-synaptic vesicular release of neurotransmitters. This Homo sapiens (Human) protein is Rab3 GTPase-activating protein non-catalytic subunit.